Consider the following 706-residue polypeptide: Complement C1r-B subcomponent (706 aa).

Residues 1–16 (MWLFALLVTLFYGVEG) form the signal peptide. Residues 17 to 140 (SIYLPQKLYG…KGFLAYYQAV (124 aa)) enclose the CUB 1 domain. Ca(2+)-binding residues include Glu-65, Asp-73, and Asp-118. A disulfide bridge connects residues Cys-70 and Cys-88. A glycan (N-linked (GlcNAc...) asparagine) is linked at Asn-124. Residues Asp-141, Leu-142, and Glu-144 each contribute to the Ca(2+) site. Positions 141–189 (DLDECASQPNSVEEGLQPRCQHLCHNYVGGYFCSCHPGYELQKDGQSCQ) constitute an EGF-like; calcium-binding domain. 4 cysteine pairs are disulfide-bonded: Cys-145-Cys-164, Cys-160-Cys-173, Cys-175-Cys-188, and Cys-192-Cys-219. The Ca(2+) site is built by Asn-166, Tyr-167, and Gly-170. Asn-166 bears the (3R)-3-hydroxyasparagine mark. The CUB 2 domain maps to 192-304 (CSSELYTEPS…RGWKLHYTTE (113 aa)). Ser-205 carries the phosphoserine; by CK2 modification. Asn-220 is a glycosylation site (N-linked (GlcNAc...) asparagine). Asp-242, Asp-252, Asp-289, and Asp-293 together coordinate Ca(2+). Cys-249 and Cys-267 are disulfide-bonded. Sushi domains follow at residues 306–372 (IKCP…RCKI) and 373–448 (KNCG…RCLP). Intrachain disulfides connect Cys-308–Cys-357, Cys-337–Cys-370, Cys-375–Cys-428, Cys-405–Cys-446, and Cys-450–Cys-578. One can recognise a Peptidase S1 domain in the interval 463–703 (IIGGQPARPG…YVDWIKKEMG (241 aa)). Active-site charge relay system residues include His-501 and Asp-558. Asn-582 is a glycosylation site (N-linked (GlcNAc...) asparagine). Intrachain disulfides connect Cys-621–Cys-640 and Cys-651–Cys-681. Ser-655 serves as the catalytic Charge relay system.

It belongs to the peptidase S1 family. In terms of assembly, core component of the complement C1 complex, a calcium-dependent complex composed of 1 molecule of the C1Q subcomplex, 2 molecules of C1R and 2 molecules of C1S. The C1Q subcomplex is composed 18 subunits: 3 chains of C1QA, C1QB, and C1QC trimerize to form 6 collagen-like triple helices connected to six globular ligand-recognition modules. Within the C1 complex, C1R is a dimer of identical chains, each of which is activated by cleavage into two chains, heavy and light, connected by disulfide bonds. Cleaved and activated by autocatalytic processing to generate Complement C1r subcomponent heavy and light chains that are connected by disulfide bonds. Post-translationally, the iron and 2-oxoglutarate dependent 3-hydroxylation of aspartate and asparagine is (R) stereospecific within EGF domains.

It localises to the secreted. The protein localises to the cell surface. It catalyses the reaction Selective cleavage of Lys(or Arg)-|-Ile bond in complement subcomponent C1s to form the active form of C1s (EC 3.4.21.42).. Activated by the C1Q subcomplex of the C1 complex following C1Q binding to immunoglobulins (IgG or IgM) complexed with antigens to form antigen-antibody complexes on the surface of pathogens. Immunoglobulin-binding promotes autoactivation of C1R, which results in the cleavage of the Arg-Ile bond in the catalytic domain. Serine protease component of the complement C1 complex, a multiprotein complex that initiates the classical pathway of the complement system, a cascade of proteins that leads to phagocytosis and breakdown of pathogens and signaling that strengthens the adaptive immune system. C1R catalyzes the first enzymatic step in the classical complement pathway: it is activated by the C1Q subcomplex of the C1 complex, which associates with IgG or IgM immunoglobulins complexed with antigens to form antigen-antibody complexes on the surface of pathogens. Immunoglobulin-binding promotes the autocatalytic cleavage and activation of C1R. Activated C1R then cleaves and activates C1S, the second protease of the classical complement pathway. It is unclear if C1R activates C1S within single, strained C1 complexes or between neighboring C1 complexes on surfaces. This chain is Complement C1r-B subcomponent (C1rb), found in Mus musculus (Mouse).